Reading from the N-terminus, the 346-residue chain is 3-dehydroquinate synthase (346 aa).

NAD(+) contacts are provided by residues 62 to 67 (DGEQYK), 96 to 100 (GVISD), 120 to 121 (TT), Lys133, and Lys142. Glu175, His234, and His251 together coordinate Zn(2+).

The protein belongs to the sugar phosphate cyclases superfamily. Dehydroquinate synthase family. It depends on Co(2+) as a cofactor. Zn(2+) serves as cofactor. The cofactor is NAD(+).

Its subcellular location is the cytoplasm. It carries out the reaction 7-phospho-2-dehydro-3-deoxy-D-arabino-heptonate = 3-dehydroquinate + phosphate. It participates in metabolic intermediate biosynthesis; chorismate biosynthesis; chorismate from D-erythrose 4-phosphate and phosphoenolpyruvate: step 2/7. Its function is as follows. Catalyzes the conversion of 3-deoxy-D-arabino-heptulosonate 7-phosphate (DAHP) to dehydroquinate (DHQ). The sequence is that of 3-dehydroquinate synthase from Campylobacter fetus subsp. fetus (strain 82-40).